We begin with the raw amino-acid sequence, 1220 residues long: Plasma membrane calcium-transporting ATPase 1 (1220 aa).

G2 carries the N-acetylglycine modification. Residues 2–105 (GDMANNSVAY…KTFLQLVWEA (104 aa)) lie on the Cytoplasmic side of the membrane. Residues S8 and S17 each carry the phosphoserine modification. Residues 106–126 (LQDVTLIILEIAAIVSLGLSF) form a helical membrane-spanning segment. Over 127-154 (YQPPEGDNALCGEVSVGEEEGEGETGWI) the chain is Extracellular. The helical transmembrane segment at 155-175 (EGAAILLSVVCVVLVTAFNDW) threads the bilayer. The Cytoplasmic segment spans residues 176–366 (SKEKQFRGLQ…KEKSVLQGKL (191 aa)). Residues 297-356 (EEEKKDEKKKEKKNKKQDGAIENRNKAKAQDGAAMEMQPLKSEEGGDGDEKDKKKANLPK) form a disordered region. Composition is skewed to basic and acidic residues over residues 312 to 325 (KQDG…KAKA) and 337 to 356 (KSEE…NLPK). Phosphoserine is present on S338. A helical transmembrane segment spans residues 367–386 (TKLAVQIGKAGLLMSAITVI). Over 387-418 (ILVLYFVIDTFWVQKRPWLAECTPIYIQYFVK) the chain is Extracellular. Residues 419–439 (FFIIGVTVLVVAVPEGLPLAV) traverse the membrane as a helical segment. Over 440–855 (TISLAYSVKK…RNVYDSISKF (416 aa)) the chain is Cytoplasmic. The active-site 4-aspartylphosphate intermediate is the D475. 4 residues coordinate Mg(2+): D475, T477, D797, and D801. The chain crosses the membrane as a helical span at residues 856–876 (LQFQLTVNVVAVIVAFTGACI). Topologically, residues 877-882 (TQDSPL) are extracellular. Residues 883-903 (KAVQMLWVNLIMDTLASLALA) traverse the membrane as a helical segment. At 904–927 (TEPPTESLLLRKPYGRNKPLISRT) the chain is on the cytoplasmic side. Residues 928–948 (MMKNILGHAFYQLVVVFTLLF) traverse the membrane as a helical segment. The Extracellular segment spans residues 949–971 (AGEKFFDIDSGRNAPLHAPPSEH). Residues 972–991 (YTIVFNTFVLMQLFNEINAR) form a helical membrane-spanning segment. Residues 992-1005 (KIHGERNVFEGIFN) are Cytoplasmic-facing. Residues 1006–1027 (NAIFCTIVLGTFVVQIIIVQFG) traverse the membrane as a helical segment. Topologically, residues 1028–1039 (GKPFSCSELSIE) are extracellular. A helical transmembrane segment spans residues 1040-1060 (QWLWSIFLGMGTLLWGQLIST). The Cytoplasmic portion of the chain corresponds to 1061–1220 (IPTSRLKFLK…SPLHSLETSL (160 aa)). A calmodulin-binding subdomain A region spans residues 1100-1117 (LRRGQILWFRGLNRIQTQ). Phosphothreonine; by PKC is present on T1116. The tract at residues 1118–1127 (IRVVNAFRSS) is calmodulin-binding subdomain B. The segment at 1118–1220 (IRVVNAFRSS…SPLHSLETSL (103 aa)) is required for basolateral membrane targeting. S1140 and S1155 each carry phosphoserine. Positions 1160-1220 (PLIDDTDAED…SPLHSLETSL (61 aa)) are disordered. Phosphothreonine is present on T1165. Residues S1178 and S1182 each carry the phosphoserine modification. Polar residues predominate over residues 1200 to 1220 (MNKSATSSSPGSPLHSLETSL).

Belongs to the cation transport ATPase (P-type) (TC 3.A.3) family. Type IIB subfamily. In terms of assembly, monomer. Dimer. Oligomer. Calmodulin binding. Interacts with PDZD11. Interacts with SLC35G1 and STIM1. Interacts with YWHAE; interacts with the monomeric and dimeric forms of the YWHAE but prefer the monomer form; this interaction inhibits calcium-transporting ATPase activity. Interacts with NPTN; this interaction stabilizes ATP2B1 and increases ATPase activity; this interaction controls T cell calcium homeostasis following T cell activation. Interacts with EPB41; regulates small intestinal calcium absorption through regulation of membrane expression of ATP2B1.

The protein localises to the cell membrane. The protein resides in the basolateral cell membrane. It localises to the synapse. It is found in the presynaptic cell membrane. Its subcellular location is the cytoplasmic vesicle. The protein localises to the secretory vesicle. The protein resides in the synaptic vesicle membrane. The catalysed reaction is Ca(2+)(in) + ATP + H2O = Ca(2+)(out) + ADP + phosphate + H(+). Catalyzes the hydrolysis of ATP coupled with the transport of calcium from the cytoplasm to the extracellular space thereby maintaining intracellular calcium homeostasis. Plays a role in blood pressure regulation through regulation of intracellular calcium concentration and nitric oxide production leading to regulation of vascular smooth muscle cells vasoconstriction. Positively regulates bone mineralization through absorption of calcium from the intestine. Plays dual roles in osteoclast differentiation and survival by regulating RANKL-induced calcium oscillations in preosteoclasts and mediating calcium extrusion in mature osteoclasts. Regulates insulin sensitivity through calcium/calmodulin signaling pathway by regulating AKT1 activation and NOS3 activation in endothelial cells. May play a role in synaptic transmission by modulating calcium and proton dynamics at the synaptic vesicles. The protein is Plasma membrane calcium-transporting ATPase 1 of Sus scrofa (Pig).